The primary structure comprises 799 residues: Integrin beta-1 (799 aa).

Positions 1–20 (MNLQLVFWIGLISLICSVFG) are cleaved as a signal peptide. The Extracellular segment spans residues 21–729 (QTDKNRCLKA…ETPDCPTGPD (709 aa)). The PSI domain maps to 26 to 76 (RCLKANAKSCGECIQAGPNCGWCTNTTFLQEGMPTSARCDDLEALKKKGCH). Disulfide bonds link Cys-27–Cys-45, Cys-35–Cys-465, Cys-38–Cys-64, Cys-48–Cys-75, Cys-207–Cys-213, Cys-261–Cys-301, Cys-401–Cys-415, Cys-435–Cys-463, Cys-467–Cys-487, Cys-478–Cys-490, Cys-492–Cys-501, Cys-503–Cys-534, Cys-517–Cys-532, Cys-526–Cys-537, Cys-539–Cys-554, Cys-556–Cys-577, Cys-561–Cys-575, Cys-569–Cys-580, Cys-582–Cys-591, Cys-593–Cys-616, Cys-600–Cys-614, Cys-608–Cys-619, Cys-621–Cys-631, Cys-634–Cys-637, Cys-641–Cys-692, Cys-647–Cys-666, Cys-650–Cys-662, and Cys-700–Cys-724. 3 N-linked (GlcNAc...) asparagine glycosylation sites follow: Asn-50, Asn-94, and Asn-97. Residues 140–378 (DYPIDLYYLM…QLIIDAYNSL (239 aa)) form the VWFA domain. Residues Ser-152 and Ser-154 each coordinate Mg(2+). Residues Ser-154, Asp-157, Asp-158, and Glu-189 each contribute to the Ca(2+) site. Positions 207 to 213 (CTSEQNC) are CX3CL1-binding. The N-linked (GlcNAc...) asparagine glycan is linked to Asn-212. Ca(2+) is bound by residues Asn-244, Asp-246, Pro-248, and Glu-249. Glu-249 is a Mg(2+) binding site. Residue Asn-269 is glycosylated (N-linked (GlcNAc...) asparagine). A CX3CL1-binding region spans residues 295–314 (LPNDGQCHLENNVYTMSHYY). Residue Gly-362 coordinates Ca(2+). Residues Asn-363, Asn-406, and Asn-417 are each glycosylated (N-linked (GlcNAc...) asparagine). The interaction with TMEM182 stretch occupies residues 383 to 466 (ILENSKLPDG…VVLQFICKCN (84 aa)). I-EGF domains lie at 467–502 (CQSHGIPASPKCHEGNGTFECGACRCNEGRVGRHCE), 503–555 (CSTD…KFCE), 556–592 (CDNFNCDRSNGLICGGNGVCRCRVCECYPNYTGSACD), and 593–632 (CSLDTVPCVATNGQICNGRGICECGACKCTDPKFQGPTCE). Asn-482 is a glycosylation site (N-linked (GlcNAc...) asparagine). The N-linked (GlcNAc...) asparagine glycan is linked to Asn-521. N-linked (GlcNAc...) asparagine glycosylation is present at Asn-585. Asn-670 carries an N-linked (GlcNAc...) asparagine glycan. Residues 730–752 (IIPIVAGVVAGIVLIGLALLLIW) traverse the membrane as a helical segment. Residues 753 to 799 (KLLMIIHDRREFAKFEKEKMNAKWDTGENPIYKSAVTTVVNPKYEGK) are Cytoplasmic-facing. The interval 763–768 (EFAKFE) is signal for sorting from recycling endosomes; interaction with ACAP1. Thr-778 is subject to Phosphothreonine. Residue Tyr-784 is modified to Phosphotyrosine. A Phosphoserine modification is found at Ser-786. The interaction with ITGB1BP1 stretch occupies residues 786 to 793 (SAVTTVVN). A Phosphothreonine modification is found at Thr-790. N6-acetyllysine; alternate is present on Lys-795. Lys-795 participates in a covalent cross-link: Glycyl lysine isopeptide (Lys-Gly) (interchain with G-Cter in SUMO1); alternate.

This sequence belongs to the integrin beta chain family. As to quaternary structure, interacts with seprase FAP (seprase); the interaction occurs at the cell surface of invadopodia membrane in a collagen-dependent manner. Heterodimer of an alpha and a beta subunit. Beta-1 associates with either alpha-1, alpha-2, alpha-3, alpha-4, alpha-5, alpha-6, alpha-7, alpha-8, alpha-9, alpha-10, alpha-11 or alpha-V. ITGA6:ITGB1 is found in a complex with CD9; interaction takes place in oocytes and is involved in sperm-egg fusion. Binds LGALS3BP and NMRK2, when associated with alpha-7, but not with alpha-5. Interacts with FLNA, FLNB, FLNC and RANBP9. Interacts with KRT1 in the presence of RACK1 and SRC. Interacts with JAML; integrin alpha-4/beta-1 may regulate leukocyte to endothelial cells adhesion by controlling JAML homodimerization. Interacts with RAB21. Interacts (via the cytoplasmic region) with RAB25 (via the hypervariable C-terminal region). Interacts with MYO10. Interacts with ITGB1BP1 (via C-terminal region); the interaction is a prerequisite for focal adhesion disassembly. Interacts with TLN1; the interaction is prevented by competitive binding of ITGB1BP1. Interacts with ACAP1; required for ITGB1 recycling. Interacts with ASAP3. Interacts with FERMT2; the interaction is inhibited in presence of ITGB1BP1. Interacts with DAB2. Interacts with FGR and HCK. Interacts with alpha-7A and alpha-7B in adult skeletal muscle. Interacts with alpha-7B in cardiomyocytes of adult heart. Interacts with EMP2; the interaction may be direct or indirect and ITGB1 has a heterodimer form. ITGA5:ITGB1 interacts with CCN3. ITGA4:ITGB1 is found in a ternary complex with CX3CR1 and CX3CL1. ITGA5:ITGB1 interacts with FBN1. ITGA5:ITGB1 acts as a receptor for fibronectin FN1 and mediates R-G-D-dependent cell adhesion to FN1. ITGA5:ITGB1 interacts with IL1B. Interacts with MDK. ITGA4:ITGB1 interacts with MDK; this interaction mediates MDK-induced osteoblast cells migration through PXN phosphorylation. ITGA6:ITGB1 interacts with MDK; this interaction mediates MDK-induced neurite-outgrowth. ITGA5:ITGB1 interacts with ACE2. Interacts with TMEM182 and LAMB1. Interacts with tensin TNS3; TNS3 also interacts with PEAK1, thus acting as an adapter molecule to bridge the association of PEAK1 with ITGB1. Interacts with tensin TNS4; the interaction displaces tensin TNS3 from the ITGB1 cytoplasmic tail and promotes ITGB1 stability. Integrin ITGA9:ITGB1 interacts with SPP1/OPN (via N-terminus). Integrin ITGA9:ITGB1 interacts with TNC/TNFN3 (via the 3rd Fibronectin type-III domain). Integrins ITGA4:ITGB1 and ITGA9:ITGB1 interact with SVEP1 (via Sushi domain 21); thereby inhibit Ca(2+) intracellular signaling and as a result repress vasocontraction. ITGA4:ITGB1 and ITGA5:ITGB1 interacts with SELP. ITGA5:ITGB1 interacts with IGFBP1. ITGA4:ITGB1 interacts with BCAM. Interacts with ADGRG6.

The protein resides in the cell membrane. It is found in the cell projection. It localises to the invadopodium membrane. Its subcellular location is the ruffle membrane. The protein localises to the recycling endosome. The protein resides in the melanosome. It is found in the lamellipodium. It localises to the ruffle. Its subcellular location is the cell junction. The protein localises to the focal adhesion. Functionally, integrins alpha-1/beta-1, alpha-2/beta-1, alpha-10/beta-1 and alpha-11/beta-1 are receptors for collagen. Integrins alpha-1/beta-1 and alpha-2/beta-2 recognize the proline-hydroxylated sequence G-F-P-G-E-R in collagen. Integrins alpha-2/beta-1, alpha-3/beta-1, alpha-4/beta-1, alpha-5/beta-1, alpha-8/beta-1, alpha-10/beta-1, alpha-11/beta-1 and alpha-V/beta-1 are receptors for fibronectin. Alpha-4/beta-1 recognizes one or more domains within the alternatively spliced CS-1 and CS-5 regions of fibronectin. Integrin alpha-5/beta-1 is a receptor for fibrinogen. Integrin alpha-1/beta-1, alpha-2/beta-1, alpha-6/beta-1 and alpha-7/beta-1 are receptors for lamimin. Integrin alpha-6/beta-1 (ITGA6:ITGB1) is present in oocytes and is involved in sperm-egg fusion. Integrin alpha-4/beta-1 is a receptor for VCAM1 and recognizes the sequence Q-I-D-S in VCAM1. Integrin alpha-9/beta-1 is a receptor for VCAM1, cytotactin and osteopontin. It recognizes the sequence A-E-I-D-G-I-E-L in cytotactin. Integrin alpha-3/beta-1 is a receptor for epiligrin, thrombospondin and CSPG4. Integrin alpha-3/beta-1 provides a docking site for FAP (seprase) at invadopodia plasma membranes in a collagen-dependent manner and hence may participate in the adhesion, formation of invadopodia and matrix degradation processes, promoting cell invasion. Alpha-3/beta-1 may mediate with LGALS3 the stimulation by CSPG4 of endothelial cells migration. Integrin alpha-V/beta-1 is a receptor for vitronectin. Beta-1 integrins recognize the sequence R-G-D in a wide array of ligands. When associated with alpha-7/beta-1 integrin, regulates cell adhesion and laminin matrix deposition. Involved in promoting endothelial cell motility and angiogenesis. Involved in osteoblast compaction through the fibronectin fibrillogenesis cell-mediated matrix assembly process and the formation of mineralized bone nodules. May be involved in up-regulation of the activity of kinases such as PKC via binding to KRT1. Together with KRT1 and RACK1, serves as a platform for SRC activation or inactivation. Plays a mechanistic adhesive role during telophase, required for the successful completion of cytokinesis. ITGA4:ITGB1 binds to fractalkine (CX3CL1) and may act as its coreceptor in CX3CR1-dependent fractalkine signaling. ITGA4:ITGB1 and ITGA5:ITGB1 bind to PLA2G2A via a site (site 2) which is distinct from the classical ligand-binding site (site 1) and this induces integrin conformational changes and enhanced ligand binding to site 1. ITGA5:ITGB1 acts as a receptor for fibrillin-1 (FBN1) and mediates R-G-D-dependent cell adhesion to FBN1. ITGA5:ITGB1 is a receptor for IL1B and binding is essential for IL1B signaling. ITGA5:ITGB3 is a receptor for soluble CD40LG and is required for CD40/CD40LG signaling. Plays an important role in myoblast differentiation and fusion during skeletal myogenesis. ITGA9:ITGB1 may play a crucial role in SVEP1/polydom-mediated myoblast cell adhesion. Integrins ITGA9:ITGB1 and ITGA4:ITGB1 repress PRKCA-mediated L-type voltage-gated channel Ca(2+) influx and ROCK-mediated calcium sensitivity in vascular smooth muscle cells via their interaction with SVEP1, thereby inhibit vasocontraction. The sequence is that of Integrin beta-1 (Itgb1) from Rattus norvegicus (Rat).